Consider the following 496-residue polypeptide: Pseudooxynicotine dehydrogenase (496 aa).

The segment at residues 1-42 (MTKDGDEGSKSGVSRRKFLGSAAVGVATAGIASQLLTLSAPA) is a signal peptide (tat-type signal). The FAD site is built by alanine 69, glutamate 88, arginine 96, tryptophan 113, valine 285, serine 461, and isoleucine 471.

This sequence belongs to the flavin monoamine oxidase family. In terms of assembly, homodimer. FAD serves as cofactor. Predicted to be exported by the Tat system. The position of the signal peptide cleavage has not been experimentally proven.

It is found in the periplasm. The enzyme catalyses pseudooxynicotine + 2 Fe(III)-[cytochrome c] + H2O = 4-oxo-4-(pyridin-3-yl)butanal + methylamine + 2 Fe(II)-[cytochrome c] + 2 H(+). The protein operates within alkaloid degradation; nicotine degradation. Its activity is regulated as follows. Strongly inhibited by Na(2)MoO(4) and FeCl(3). Activity is nearly twice as high in the presence of Na(2)WO(4). Functionally, involved in nicotine degradation. Catalyzes the deamination of pseudooxynicotine to 3-succinoylsemialdehyde-pyridine. Functions as a dehydrogenase that uses the c-type cytochrome protein CycN as the physiological electron acceptor. O(2) is a poor electron acceptor. Pnao is oxidized by CycN 230 times faster than O(2) at equivalent oxidant concentrations. The polypeptide is Pseudooxynicotine dehydrogenase (Pseudomonas putida (strain DSM 28022 / S16)).